The following is a 205-amino-acid chain: Thiamine-phosphate synthase (205 aa).

4-amino-2-methyl-5-(diphosphooxymethyl)pyrimidine-binding positions include 35 to 39 (QYRDK) and asparagine 67. Residues aspartate 68 and aspartate 86 each coordinate Mg(2+). Residue threonine 105 participates in 4-amino-2-methyl-5-(diphosphooxymethyl)pyrimidine binding. Residue 132–134 (SLT) coordinates 2-[(2R,5Z)-2-carboxy-4-methylthiazol-5(2H)-ylidene]ethyl phosphate. Lysine 135 contributes to the 4-amino-2-methyl-5-(diphosphooxymethyl)pyrimidine binding site. Residue glycine 162 coordinates 2-[(2R,5Z)-2-carboxy-4-methylthiazol-5(2H)-ylidene]ethyl phosphate.

It belongs to the thiamine-phosphate synthase family. Mg(2+) serves as cofactor.

The catalysed reaction is 2-[(2R,5Z)-2-carboxy-4-methylthiazol-5(2H)-ylidene]ethyl phosphate + 4-amino-2-methyl-5-(diphosphooxymethyl)pyrimidine + 2 H(+) = thiamine phosphate + CO2 + diphosphate. It carries out the reaction 2-(2-carboxy-4-methylthiazol-5-yl)ethyl phosphate + 4-amino-2-methyl-5-(diphosphooxymethyl)pyrimidine + 2 H(+) = thiamine phosphate + CO2 + diphosphate. The enzyme catalyses 4-methyl-5-(2-phosphooxyethyl)-thiazole + 4-amino-2-methyl-5-(diphosphooxymethyl)pyrimidine + H(+) = thiamine phosphate + diphosphate. The protein operates within cofactor biosynthesis; thiamine diphosphate biosynthesis; thiamine phosphate from 4-amino-2-methyl-5-diphosphomethylpyrimidine and 4-methyl-5-(2-phosphoethyl)-thiazole: step 1/1. In terms of biological role, condenses 4-methyl-5-(beta-hydroxyethyl)thiazole monophosphate (THZ-P) and 2-methyl-4-amino-5-hydroxymethyl pyrimidine pyrophosphate (HMP-PP) to form thiamine monophosphate (TMP). The sequence is that of Thiamine-phosphate synthase from Pseudomonas savastanoi pv. phaseolicola (strain 1448A / Race 6) (Pseudomonas syringae pv. phaseolicola (strain 1448A / Race 6)).